Here is a 710-residue protein sequence, read N- to C-terminus: Protein phosphatase 1 regulatory subunit 37 (710 aa).

Pro residues predominate over residues 1 to 12 (MEIPPQEAPPGP). Residues 1-46 (MEIPPQEAPPGPGADADADAEAEEAPAEAGSSSGASPPTDGRLKAA) form a disordered region. Residues 16–26 (ADADAEAEEAP) are compositionally biased toward acidic residues. Over residues 27–38 (AEAGSSSGASPP) the composition is skewed to low complexity. 2 positions are modified to phosphoserine: S54 and S60. LRR repeat units lie at residues 224-244 (SLAV…MLLA), 252-273 (NLQE…AQLG), 281-301 (SLQI…AYIC), 310-330 (GLVT…AFLG), and 338-358 (SLET…RNLK). Residues 487 to 677 (PLEESGDLPA…APPGLEAKGS (191 aa)) form a disordered region. The span at 512 to 531 (SDSDSDSDREEQEEEEEDQS) shows a compositional bias: acidic residues. A compositionally biased stretch (low complexity) spans 543–565 (SSSAPCPALLPSTDSLGPGDKSP). Residue S581 is modified to Phosphoserine. The span at 603 to 624 (PPVPPTSVSSPPPSPPSPPASP) shows a compositional bias: pro residues. The span at 637–649 (SEAQPQTEPSQAG) shows a compositional bias: polar residues. The segment covering 656-676 (LKPEFALALAPEAPPGLEAKG) has biased composition (low complexity).

Belongs to the PPP1R37 family. In terms of assembly, interacts with PPP1CA.

Its function is as follows. Inhibits phosphatase activity of protein phosphatase 1 (PP1) complexes. The chain is Protein phosphatase 1 regulatory subunit 37 (Ppp1r37) from Rattus norvegicus (Rat).